A 53-amino-acid chain; its full sequence is Natriuretic peptide DNP-2 (53 aa).

Cysteine 7 and cysteine 23 are oxidised to a cystine. A propeptide spanning residues 39–53 is cleaved from the precursor; the sequence is IIRDLHPDSKQSQAA.

Belongs to the natriuretic peptide family. As to expression, expressed by the venom gland.

The protein localises to the secreted. Functionally, exhibits vasodilator, natriuretic and diuretic properties in animal models and human tissues. Acts by stimulating cGMP via the natriuretic peptide receptor 1 (NPR1). Is a poor agonist of the atrial natriuretic peptide receptor 2 (NPR2). Is not degraded by neutral endopeptidase (NEP/MME). Binds to atrial natriuretic peptide clearance receptor (NPR-C/NPR3), which may be responsible of the removal of DNP from the circulation. Increases calcium uptake and induces histamine release from rat peritoneal mast cells. Increases calcium-activated potassium (KCa) current in gastric antral circular smooth muscle cells by increasing cGMP production and activating inositol trisphosphate receptors (IP3Rs). In vivo, reduces both systolic and diastolic blood pressure with no effect on heart rate, when intravenously injected in conscious rabbits. This is Natriuretic peptide DNP-2 from Dendroaspis angusticeps (Eastern green mamba).